The following is a 324-amino-acid chain: MSTLTPGRPYAPGRQGFSSLRAGGLNWDAFPLRLFTKGNAKFWNPTDLDFSRDAEDWEGLNSEQQRNSTYLVAQFIAGEEAVTEDIQPFMKAMAAEGRFGDEMYLTQFCFEEAKHTQVFRLWMDAVGLTRDLHPFVAENPYYRQLFYEELPGSLKVLETDPSPVNQVRASVTYNHVIEGSLALTGYYAWQKVCTTRGILPGMQELVRRIGDDERRHMAWGTFTCRRHVAADDSNWGVVQERMAELMPLALGMIDWVNKQFEVQPYGLDDQEFIAYAADRAQRRLGAIESARGRPVEEIDLDYSPEALEEKFGEEDAKAMSEAAG.

Residues E79, E112, and H115 each coordinate Mn(2+). The segment at residues 82 to 173 (VTEDIQPFMK…VNQVRASVTY (92 aa)) is a cross-link (3-(O4'-tyrosyl)-valine (Val-Tyr)). E112 provides a ligand contact to Fe cation. Residues E178, E213, and H216 each contribute to the Fe cation site. A disordered region spans residues 304–324 (PEALEEKFGEEDAKAMSEAAG). Residues 307 to 318 (LEEKFGEEDAKA) show a composition bias toward basic and acidic residues.

The protein belongs to the ribonucleoside diphosphate reductase small chain family. R2-like ligand binding oxidase subfamily. Homodimer. It depends on Fe cation as a cofactor. Mn(2+) is required as a cofactor.

Functionally, probable oxidase. This Rhodococcus jostii (strain RHA1) protein is R2-like ligand binding oxidase.